A 190-amino-acid chain; its full sequence is Transcription termination/antitermination protein NusG (190 aa).

The region spanning 138 to 166 (VGEIVTVTEGPFETFTGTVEEVDQEKARL) is the KOW domain.

Belongs to the NusG family.

Its function is as follows. Participates in transcription elongation, termination and antitermination. The protein is Transcription termination/antitermination protein NusG of Rickettsia bellii (strain RML369-C).